A 328-amino-acid chain; its full sequence is Malate dehydrogenase (328 aa).

NAD(+) is bound at residue 12–18; sequence GAAGQIG. Residues R95 and R101 each contribute to the substrate site. NAD(+) contacts are provided by residues N108, Q115, and 132 to 134; that span reads VGN. N134 and R165 together coordinate substrate. H190 acts as the Proton acceptor in catalysis.

It belongs to the LDH/MDH superfamily. MDH type 2 family.

The enzyme catalyses (S)-malate + NAD(+) = oxaloacetate + NADH + H(+). Functionally, catalyzes the reversible oxidation of malate to oxaloacetate. The protein is Malate dehydrogenase of Polaromonas naphthalenivorans (strain CJ2).